A 155-amino-acid chain; its full sequence is uncharacterized protein (155 aa).

Positions 1 to 19 are cleaved as a signal peptide; the sequence is MPLSKTLVQKLQQAGMAIA.

This is an uncharacterized protein from Haemophilus influenzae (strain ATCC 51907 / DSM 11121 / KW20 / Rd).